The primary structure comprises 185 residues: Iodate reductase subunit IdrB (185 aa).

The tat-type signal signal peptide spans 1–46; that stretch reads MTTHPIHLHHDDPAHGGERACMSRRSFLLAGGAMVTLASLPGTAVA. In terms of domain architecture, Rieske spans 69–168; sequence GEPLEFAYPY…LEVRGDDIYA (100 aa). Residues cysteine 109, histidine 111, cysteine 130, and histidine 133 each contribute to the [2Fe-2S] cluster site.

Belongs to the AOX family. The iodate reductase (Idr) complex is composed of a molybdopterin-dependent iodate reductase (IdrA and IdrB subunits) and two associated peroxidases (IdrP1 and IdrP2). Requires [2Fe-2S] cluster as cofactor. Post-translationally, predicted to be exported by the Tat system. The position of the signal peptide cleavage has not been experimentally proven.

The protein resides in the periplasm. In terms of biological role, involved in iodate respiration. May accept electrons from cytochrome c551, and catalyze the reduction of iodate (IO(3)(-)) to produce the chemically unstable intermediate hypoiodous acid (HIO). This intermediate then undergoes abiotic disproportionation to yield two molecules of iodide (I(-)) and one molecule of iodate. The resultant iodate subsequently cycles back into the reductive pathway. The initial reduction of iodate may inadvertently produce low levels of incidental toxic H(2)O(2), which is detoxified by IdrP1 and IdrP2. The protein is Iodate reductase subunit IdrB of Denitromonas iodatirespirans.